Consider the following 896-residue polypeptide: NEDD4-binding protein 1 (896 aa).

One can recognise a KH-like domain in the interval 59–143; sequence QEAVHSAKEY…IQQFVKLFEN (85 aa). Residue Ser226 is modified to Phosphoserine. At Thr242 the chain carries Phosphothreonine. Phosphoserine is present on residues Ser258 and Ser300. Disordered stretches follow at residues 403–430 and 488–507; these read YPETNKTKNKGVYSSTNELTTDSTPKKT and ETDGLSPSVASPSPKEVNFV. Residues 414-430 show a composition bias toward polar residues; that stretch reads VYSSTNELTTDSTPKKT. Position 562 is a phosphoserine (Ser562). Residues 617–769 enclose the RNase NYN domain; that stretch reads LKHIVIDGSN…LGRSGPRLEE (153 aa). The tract at residues 801-821 is disordered; that stretch reads GTQAASTSHQPPTRIQGAPSS. A compositionally biased stretch (polar residues) spans 803–813; that stretch reads QAASTSHQPPT. Positions 849–896 are coCUN; that stretch reads RSSAETNELREALLKIFPDSEQRLKIDQILVAHPYMKDLNALSAMVLD.

Belongs to the N4BP1 family. As to quaternary structure, interacts with NEDD4. Interacts with ITCH (via WW domain 2). In terms of processing, proteolytically cleaved by CASP8 downstream of TLR3 or TLR4, leading to its inactivation. Mainly cleaved at Asp-490 by CASP8. Cleaved by caspase-like protein MALT1 in T-cells following TCR-mediated activation, leading to its inactivation and subsequent viral reactivation during HIV-1 infection. Mono- and polyubiquitinated on the CoCUN region. Monoubiquitinated by NEDD4. Polyubiquitinated, leading to its degradation by the proteasome. Sumoylated with SUMO1, abrogating polyubiquitination and subsequent degradation. Desumoylated by SENP1, leading to accumulation in PML nuclear bodies. In terms of tissue distribution, detected in heart, lung, brain, liver, skeletal muscle, pancreas, kidney, spleen, testis and ovary.

Its subcellular location is the cytoplasm. The protein resides in the cytosol. It is found in the nucleus. The protein localises to the nucleolus. It localises to the PML body. Proteolytic cleavage by CASP8 or MALT1 leads to its inactivation. Functionally, potent suppressor of cytokine production that acts as a regulator of innate immune signaling and inflammation. Acts as a key negative regulator of select cytokine and chemokine responses elicited by TRIF-independent Toll-like receptors (TLRs), thereby limiting inflammatory cytokine responses to minor insults. In response to more threatening pathogens, cleaved by CASP8 downstream of TLR3 or TLR4, leading to its inactivation, thereby allowing production of inflammatory cytokines. Acts as a restriction factor against some viruses, such as HIV-1: restricts HIV-1 replication by binding to HIV-1 mRNAs and mediating their degradation via its ribonuclease activity. Also acts as an inhibitor of the E3 ubiquitin-protein ligase ITCH: acts by interacting with the second WW domain of ITCH, leading to compete with ITCH's substrates and impairing ubiquitination of substrates. In Homo sapiens (Human), this protein is NEDD4-binding protein 1.